Reading from the N-terminus, the 202-residue chain is Small ribosomal subunit protein uS4c (202 aa).

Residues 90–153 (MRLDNIIFRL…KSETIISKNI (64 aa)) enclose the S4 RNA-binding domain.

Belongs to the universal ribosomal protein uS4 family. As to quaternary structure, part of the 30S ribosomal subunit. Contacts protein S5. The interaction surface between S4 and S5 is involved in control of translational fidelity.

It localises to the plastid. It is found in the chloroplast. Functionally, one of the primary rRNA binding proteins, it binds directly to 16S rRNA where it nucleates assembly of the body of the 30S subunit. Its function is as follows. With S5 and S12 plays an important role in translational accuracy. The sequence is that of Small ribosomal subunit protein uS4c (rps4) from Catharomnion ciliatum (Moss).